The sequence spans 179 residues: Large ribosomal subunit protein uL5 (179 aa).

The protein belongs to the universal ribosomal protein uL5 family. In terms of assembly, part of the 50S ribosomal subunit; part of the 5S rRNA/L5/L18/L25 subcomplex. Contacts the 5S rRNA and the P site tRNA. Forms a bridge to the 30S subunit in the 70S ribosome.

Functionally, this is one of the proteins that bind and probably mediate the attachment of the 5S RNA into the large ribosomal subunit, where it forms part of the central protuberance. In the 70S ribosome it contacts protein S13 of the 30S subunit (bridge B1b), connecting the 2 subunits; this bridge is implicated in subunit movement. Contacts the P site tRNA; the 5S rRNA and some of its associated proteins might help stabilize positioning of ribosome-bound tRNAs. The chain is Large ribosomal subunit protein uL5 from Rickettsia prowazekii (strain Madrid E).